The chain runs to 335 residues: Adenine deaminase (335 aa).

Residues His-14, His-16, and His-194 each coordinate Zn(2+). Glu-197 (proton donor) is an active-site residue. Asp-275 contacts Zn(2+). Asp-276 is a binding site for substrate.

Belongs to the metallo-dependent hydrolases superfamily. Adenosine and AMP deaminases family. Adenine deaminase type 2 subfamily. Zn(2+) is required as a cofactor.

It catalyses the reaction adenine + H2O + H(+) = hypoxanthine + NH4(+). In terms of biological role, catalyzes the hydrolytic deamination of adenine to hypoxanthine. Plays an important role in the purine salvage pathway and in nitrogen catabolism. The protein is Adenine deaminase of Chlorobium phaeobacteroides (strain BS1).